Here is a 402-residue protein sequence, read N- to C-terminus: Succinylornithine transaminase (402 aa).

Lys252 carries the post-translational modification N6-(pyridoxal phosphate)lysine.

This sequence belongs to the class-III pyridoxal-phosphate-dependent aminotransferase family. AstC subfamily. Pyridoxal 5'-phosphate is required as a cofactor.

The enzyme catalyses N(2)-succinyl-L-ornithine + 2-oxoglutarate = N-succinyl-L-glutamate 5-semialdehyde + L-glutamate. It participates in amino-acid degradation; L-arginine degradation via AST pathway; L-glutamate and succinate from L-arginine: step 3/5. Its function is as follows. Catalyzes the transamination of N(2)-succinylornithine and alpha-ketoglutarate into N(2)-succinylglutamate semialdehyde and glutamate. Can also act as an acetylornithine aminotransferase. The chain is Succinylornithine transaminase from Photorhabdus laumondii subsp. laumondii (strain DSM 15139 / CIP 105565 / TT01) (Photorhabdus luminescens subsp. laumondii).